Here is a 142-residue protein sequence, read N- to C-terminus: Ribosome-binding factor A (142 aa).

Positions 123–142 (VQRDLDSAPEDDEPETGTGH) are disordered. A compositionally biased stretch (acidic residues) spans 129 to 142 (SAPEDDEPETGTGH).

Belongs to the RbfA family. In terms of assembly, monomer. Binds 30S ribosomal subunits, but not 50S ribosomal subunits or 70S ribosomes.

It is found in the cytoplasm. In terms of biological role, one of several proteins that assist in the late maturation steps of the functional core of the 30S ribosomal subunit. Associates with free 30S ribosomal subunits (but not with 30S subunits that are part of 70S ribosomes or polysomes). Required for efficient processing of 16S rRNA. May interact with the 5'-terminal helix region of 16S rRNA. The protein is Ribosome-binding factor A of Methylobacterium radiotolerans (strain ATCC 27329 / DSM 1819 / JCM 2831 / NBRC 15690 / NCIMB 10815 / 0-1).